The chain runs to 304 residues: Porphobilinogen deaminase (304 aa).

S-(dipyrrolylmethanemethyl)cysteine is present on Cys240.

This sequence belongs to the HMBS family. As to quaternary structure, monomer. Dipyrromethane is required as a cofactor.

It carries out the reaction 4 porphobilinogen + H2O = hydroxymethylbilane + 4 NH4(+). The protein operates within porphyrin-containing compound metabolism; protoporphyrin-IX biosynthesis; coproporphyrinogen-III from 5-aminolevulinate: step 2/4. Tetrapolymerization of the monopyrrole PBG into the hydroxymethylbilane pre-uroporphyrinogen in several discrete steps. In Xanthomonas euvesicatoria pv. vesicatoria (strain 85-10) (Xanthomonas campestris pv. vesicatoria), this protein is Porphobilinogen deaminase.